An 89-amino-acid polypeptide reads, in one-letter code: Small ribosomal subunit protein uS14 (89 aa).

The protein belongs to the universal ribosomal protein uS14 family. Part of the 30S ribosomal subunit. Contacts proteins S3 and S10.

Binds 16S rRNA, required for the assembly of 30S particles and may also be responsible for determining the conformation of the 16S rRNA at the A site. This Chlorobaculum parvum (strain DSM 263 / NCIMB 8327) (Chlorobium vibrioforme subsp. thiosulfatophilum) protein is Small ribosomal subunit protein uS14.